We begin with the raw amino-acid sequence, 173 residues long: Large ribosomal subunit protein uL10 (173 aa).

It belongs to the universal ribosomal protein uL10 family. Part of the ribosomal stalk of the 50S ribosomal subunit. The N-terminus interacts with L11 and the large rRNA to form the base of the stalk. The C-terminus forms an elongated spine to which L12 dimers bind in a sequential fashion forming a multimeric L10(L12)X complex.

Forms part of the ribosomal stalk, playing a central role in the interaction of the ribosome with GTP-bound translation factors. The chain is Large ribosomal subunit protein uL10 from Maridesulfovibrio salexigens (strain ATCC 14822 / DSM 2638 / NCIMB 8403 / VKM B-1763) (Desulfovibrio salexigens).